A 376-amino-acid chain; its full sequence is Flagellin B (376 aa).

A coiled-coil region spans residues 103–130; it reads SNSSSERQAIQEEVSALNDELNRIAETT.

It belongs to the bacterial flagellin family. As to quaternary structure, heteromer of multiple flagellin subunits including FlaA, FlaB, FlaC, FlaD and possibly FlaE.

Its subcellular location is the secreted. It localises to the bacterial flagellum. In terms of biological role, flagellin is the subunit protein which polymerizes to form the filaments of bacterial flagella. FlaB is not essential for flagellar synthesis and motility. The protein is Flagellin B (flaB) of Vibrio anguillarum (Listonella anguillarum).